The following is a 160-amino-acid chain: SsrA-binding protein (160 aa).

This sequence belongs to the SmpB family.

The protein localises to the cytoplasm. Functionally, required for rescue of stalled ribosomes mediated by trans-translation. Binds to transfer-messenger RNA (tmRNA), required for stable association of tmRNA with ribosomes. tmRNA and SmpB together mimic tRNA shape, replacing the anticodon stem-loop with SmpB. tmRNA is encoded by the ssrA gene; the 2 termini fold to resemble tRNA(Ala) and it encodes a 'tag peptide', a short internal open reading frame. During trans-translation Ala-aminoacylated tmRNA acts like a tRNA, entering the A-site of stalled ribosomes, displacing the stalled mRNA. The ribosome then switches to translate the ORF on the tmRNA; the nascent peptide is terminated with the 'tag peptide' encoded by the tmRNA and targeted for degradation. The ribosome is freed to recommence translation, which seems to be the essential function of trans-translation. The chain is SsrA-binding protein from Salmonella agona (strain SL483).